The chain runs to 192 residues: 7-methyl-GTP pyrophosphatase (192 aa).

The Proton acceptor role is filled by Asp-69.

The protein belongs to the Maf family. YceF subfamily. A divalent metal cation serves as cofactor.

The protein resides in the cytoplasm. The enzyme catalyses N(7)-methyl-GTP + H2O = N(7)-methyl-GMP + diphosphate + H(+). Its function is as follows. Nucleoside triphosphate pyrophosphatase that hydrolyzes 7-methyl-GTP (m(7)GTP). May have a dual role in cell division arrest and in preventing the incorporation of modified nucleotides into cellular nucleic acids. The protein is 7-methyl-GTP pyrophosphatase of Methylobacillus flagellatus (strain ATCC 51484 / DSM 6875 / VKM B-1610 / KT).